The primary structure comprises 252 residues: Trans-aconitate 2-methyltransferase (252 aa).

It belongs to the methyltransferase superfamily. Tam family.

It is found in the cytoplasm. It catalyses the reaction trans-aconitate + S-adenosyl-L-methionine = (E)-3-(methoxycarbonyl)pent-2-enedioate + S-adenosyl-L-homocysteine. Functionally, catalyzes the S-adenosylmethionine monomethyl esterification of trans-aconitate. The sequence is that of Trans-aconitate 2-methyltransferase from Enterobacter sp. (strain 638).